The sequence spans 354 residues: DNA polymerase IV (354 aa).

Residues 3–188 enclose the UmuC domain; the sequence is VIFVDFDYFF…LDIDEIPGIG (186 aa). Residues aspartate 7 and aspartate 105 each contribute to the Mg(2+) site. Glutamate 106 is a catalytic residue.

Belongs to the DNA polymerase type-Y family. Monomer. The cofactor is Mg(2+).

Its subcellular location is the cytoplasm. The enzyme catalyses DNA(n) + a 2'-deoxyribonucleoside 5'-triphosphate = DNA(n+1) + diphosphate. Its function is as follows. Poorly processive, error-prone DNA polymerase involved in untargeted mutagenesis. Copies undamaged DNA at stalled replication forks, which arise in vivo from mismatched or misaligned primer ends. These misaligned primers can be extended by PolIV. Exhibits no 3'-5' exonuclease (proofreading) activity. May be involved in translesional synthesis. The chain is DNA polymerase IV from Sulfolobus acidocaldarius (strain ATCC 33909 / DSM 639 / JCM 8929 / NBRC 15157 / NCIMB 11770).